The primary structure comprises 272 residues: Imidazole glycerol phosphate synthase subunit HisF (272 aa).

Residues Asp-11 and Asp-130 contribute to the active site.

Belongs to the HisA/HisF family. As to quaternary structure, heterodimer of HisH and HisF.

It localises to the cytoplasm. The catalysed reaction is 5-[(5-phospho-1-deoxy-D-ribulos-1-ylimino)methylamino]-1-(5-phospho-beta-D-ribosyl)imidazole-4-carboxamide + L-glutamine = D-erythro-1-(imidazol-4-yl)glycerol 3-phosphate + 5-amino-1-(5-phospho-beta-D-ribosyl)imidazole-4-carboxamide + L-glutamate + H(+). It participates in amino-acid biosynthesis; L-histidine biosynthesis; L-histidine from 5-phospho-alpha-D-ribose 1-diphosphate: step 5/9. IGPS catalyzes the conversion of PRFAR and glutamine to IGP, AICAR and glutamate. The HisF subunit catalyzes the cyclization activity that produces IGP and AICAR from PRFAR using the ammonia provided by the HisH subunit. The sequence is that of Imidazole glycerol phosphate synthase subunit HisF from Methanococcus maripaludis (strain C7 / ATCC BAA-1331).